Reading from the N-terminus, the 757-residue chain is Lysyl oxidase homolog 4 (757 aa).

The first 25 residues, M1–P25, serve as a signal peptide directing secretion. SRCR domains are found at residues L33–H134, V160–V288, V312–N412, and V422–M530. Cystine bridges form between C59–C123, C72–C133, C103–C113, C192–C277, C205–C287, C252–C262, C337–C401, C350–C411, C381–C391, C451–C516, C464–C529, C498–C508, C559–C565, C611–C659, C643–C649, C671–C681, and C718–C732. N199 is a glycosylation site (N-linked (GlcNAc...) asparagine). Positions P534–S737 are lysyl-oxidase like. Positions 612, 614, and 616 each coordinate Cu cation. N630 is a glycosylation site (N-linked (GlcNAc...) asparagine). Positions K639–Y675 form a cross-link, lysine tyrosylquinone (Lys-Tyr). At Y675 the chain carries 2',4',5'-topaquinone.

It belongs to the lysyl oxidase family. Cu cation serves as cofactor. The cofactor is lysine tyrosylquinone residue. In terms of processing, the lysine tyrosylquinone cross-link (LTQ) is generated by condensation of the epsilon-amino group of a lysine with a topaquinone produced by oxidation of tyrosine. Post-translationally, may be proteolytically cleaved by BMP1.

The protein localises to the secreted. The protein resides in the extracellular space. The catalysed reaction is L-lysyl-[protein] + O2 + H2O = (S)-2-amino-6-oxohexanoyl-[protein] + H2O2 + NH4(+). Catalyzes the oxidative deamination of lysine and hydroxylysine residues in collagen and elastin, resulting in the formation of covalent cross-linkages, and the stabilization of collagen and elastin fibers. This is Lysyl oxidase homolog 4 (Loxl4) from Mus musculus (Mouse).